A 452-amino-acid polypeptide reads, in one-letter code: Gamma conglutin 1 (452 aa).

The signal sequence occupies residues 1–33; the sequence is MAKNMAPILHILVISLSYSFLFVTSSSQNSQSL. The Peptidase A1 domain occupies 61–432; sequence HWGNILKRTP…DLARSRVGFN (372 aa). 5 disulfides stabilise this stretch: Cys89–Cys179, Cys103–Cys116, Cys108–Cys134, Cys119–Cys129, and Cys353–Cys394. Asn131 is a glycosylation site (N-linked (GlcNAc...) asparagine).

The protein belongs to the peptidase A1 family. In terms of assembly, two-subunit monomeric unit made of alpha and beta subunits coupled by disulfide bonds (at pH 4.5 and under non-reducing conditions). Monomeric alpha and beta subunits in reducing conditions. Can also form oligomers including dimer, tetramer and cyclic hexamer (trimer of dimers) (at pH &gt; 5.5). Component of globulins complexes which accumulate in seeds. Interacts with flavonoids (e.g. apigenin glucosides) present in globulins complexes. In terms of processing, glycosylated on alpha chain at Asn-131; identified N-glycans bound are Man(2)(Xyl)(Fuc)GlcNAc(2), Man(3)(Xyl)(Fuc)GlcNAc(2), GlcNAcMan(3)(Xyl)(Fuc)GlcNAc(2) and GlcNAc(2)Man(3)(Xyl)(Fuc)GlcNAc(2). In terms of tissue distribution, expressed in developing seeds and in the young roots and cotyledons of germinating seeds and young seedlings.

Its subcellular location is the secreted. The protein resides in the extracellular space. Functionally, sulfur-rich seed storage protein that remains undegraded at germination. The uncleaved form exhibits some inhibitory activity against GH11 xylanase from T.longibrachiatum, more at pH 7 than at pH 5.3, but not against GH12 xyloglucan-specific endoglucanase (XEG) from A.aculeatus. Binds to model phospholipid membranes containing dimyristoyl phosphatidylglycerol (DMPG), dioleoyl phosphatidic acid (DOPA) or mixture of dimyristoyl phosphatidylcholine and dimyristoyl phosphatidylglycerol (DMPC:DMPG), or mixture of dioleoyl phosphatidic acid and dioleoyl phosphatidylcholine (DOPC:DOPA). The protein is Gamma conglutin 1 of Lupinus albus (White lupine).